Here is a 198-residue protein sequence, read N- to C-terminus: MGSQSSKAPRGDVTAEEAAGASPAKVNGQENGHVKSNGDLSPKGEGESPPVNGTEEAAGATGDAIEPAPPSQGAEAKGEVPPKETPKKKKKFSFKKPFKLSGLSFKRNRKEGGGDSSASSPTEEEQEQGEISACGEEGTAQEGKAAATPESQEPQAKGAEASAAAKGGDTEEAGPQAAEPSTPSGPESDPAPASEQNE.

The disordered stretch occupies residues Met-1–Glu-198. Residue Gly-2 is the site of N-myristoyl glycine attachment. Residue Thr-14 is modified to Phosphothreonine. 4 positions are modified to phosphoserine: Ser-22, Ser-36, Ser-41, and Ser-48. A compositionally biased stretch (low complexity) spans Gly-53–Gly-62. Ser-71 carries the phosphoserine modification. Residues Ala-76 to Thr-85 show a composition bias toward basic and acidic residues. Thr-85 is subject to Phosphothreonine. A compositionally biased stretch (basic residues) spans Pro-86–Phe-98. The effector domain involved in lipid-binding and calmodulin-binding stretch occupies residues Lys-87–Lys-110. Phosphoserine; by PKC occurs at positions 93, 101, and 104. Ser-119 is subject to Phosphoserine. Residue Ser-120 is modified to Phosphoserine; by MAPK8. Phosphoserine is present on Ser-132. Thr-148 bears the Phosphothreonine; by MAPK8 mark. Phosphoserine is present on residues Ser-151 and Ser-162. Residues Ala-156–Gly-167 are compositionally biased toward low complexity. Phosphothreonine is present on Thr-170. At Thr-182 the chain carries Phosphothreonine; by MAPK8.

Belongs to the MARCKS family. In terms of assembly, binds to filamentous actin (F-actin), but not to monomeric G-actin, independently of its phosphorylation status. Interacts with calmodulin. Phosphorylated. Phosphorylation at Ser-120 and Thr-182 is non-redundantly catalyzed by MAPK8 in vivo. Phosphorylation at Thr-148 is preferentially catalyzed by MAPK8 in vivo, but this modification can also be catalyzed by other kinases in the absence of MAPK8. May be phosphorylated by protein kinase C, which disrupts the interaction with calmodulin.

The protein resides in the cytoplasm. The protein localises to the cytoskeleton. Its subcellular location is the cell membrane. Controls cell movement by regulating actin cytoskeleton homeostasis and filopodium and lamellipodium formation. When unphosphorylated, induces cell migration. When phosphorylated by MAPK8, induces actin bundles formation and stabilization, thereby reducing actin plasticity, hence restricting cell movement, including neuronal migration. May be involved in coupling the protein kinase C and calmodulin signal transduction systems. The chain is MARCKS-related protein (MARCKSL1) from Bos taurus (Bovine).